We begin with the raw amino-acid sequence, 542 residues long: Phosphoenolpyruvate carboxykinase (ATP) (542 aa).

Substrate contacts are provided by R67, Y208, and K214. Residues K214, H233, and 249–257 (GLSGTGKTT) contribute to the ATP site. Residues K214 and H233 each coordinate Mn(2+). Position 270 (D270) interacts with Mn(2+). ATP contacts are provided by residues E298, R334, 450–451 (RI), and T456. R334 is a binding site for substrate.

This sequence belongs to the phosphoenolpyruvate carboxykinase (ATP) family. Monomer. The cofactor is Mn(2+).

Its subcellular location is the cytoplasm. The catalysed reaction is oxaloacetate + ATP = phosphoenolpyruvate + ADP + CO2. It functions in the pathway carbohydrate biosynthesis; gluconeogenesis. Functionally, involved in the gluconeogenesis. Catalyzes the conversion of oxaloacetate (OAA) to phosphoenolpyruvate (PEP) through direct phosphoryl transfer between the nucleoside triphosphate and OAA. This chain is Phosphoenolpyruvate carboxykinase (ATP), found in Vibrio cholerae serotype O1 (strain ATCC 39541 / Classical Ogawa 395 / O395).